A 255-amino-acid chain; its full sequence is Probable histidinol-phosphatase (255 aa).

This sequence belongs to the PHP hydrolase family. HisK subfamily.

It carries out the reaction L-histidinol phosphate + H2O = L-histidinol + phosphate. It participates in amino-acid biosynthesis; L-histidine biosynthesis; L-histidine from 5-phospho-alpha-D-ribose 1-diphosphate: step 8/9. This chain is Probable histidinol-phosphatase (hisK), found in Clostridium acetobutylicum (strain ATCC 824 / DSM 792 / JCM 1419 / IAM 19013 / LMG 5710 / NBRC 13948 / NRRL B-527 / VKM B-1787 / 2291 / W).